The primary structure comprises 463 residues: Siroheme synthase 1 (463 aa).

The precorrin-2 dehydrogenase /sirohydrochlorin ferrochelatase stretch occupies residues 1 to 203 (MDFLPLFCQL…GQQQAAEESV (203 aa)). NAD(+) contacts are provided by residues 22 to 23 (EV) and 43 to 44 (PH). The residue at position 128 (serine 128) is a Phosphoserine. Residues 215 to 463 (GSVTLVGAGP…YGEANTLAGV (249 aa)) are uroporphyrinogen-III C-methyltransferase. Proline 224 contributes to the S-adenosyl-L-methionine binding site. The active-site Proton acceptor is aspartate 247. Lysine 269 functions as the Proton donor in the catalytic mechanism. Residues 300–302 (GGD), isoleucine 305, 330–331 (TA), methionine 382, and glycine 411 each bind S-adenosyl-L-methionine.

This sequence in the N-terminal section; belongs to the precorrin-2 dehydrogenase / sirohydrochlorin ferrochelatase family. It in the C-terminal section; belongs to the precorrin methyltransferase family.

It carries out the reaction uroporphyrinogen III + 2 S-adenosyl-L-methionine = precorrin-2 + 2 S-adenosyl-L-homocysteine + H(+). It catalyses the reaction precorrin-2 + NAD(+) = sirohydrochlorin + NADH + 2 H(+). The enzyme catalyses siroheme + 2 H(+) = sirohydrochlorin + Fe(2+). Its pathway is cofactor biosynthesis; adenosylcobalamin biosynthesis; precorrin-2 from uroporphyrinogen III: step 1/1. It functions in the pathway cofactor biosynthesis; adenosylcobalamin biosynthesis; sirohydrochlorin from precorrin-2: step 1/1. The protein operates within porphyrin-containing compound metabolism; siroheme biosynthesis; precorrin-2 from uroporphyrinogen III: step 1/1. It participates in porphyrin-containing compound metabolism; siroheme biosynthesis; siroheme from sirohydrochlorin: step 1/1. Its pathway is porphyrin-containing compound metabolism; siroheme biosynthesis; sirohydrochlorin from precorrin-2: step 1/1. In terms of biological role, multifunctional enzyme that catalyzes the SAM-dependent methylations of uroporphyrinogen III at position C-2 and C-7 to form precorrin-2 via precorrin-1. Then it catalyzes the NAD-dependent ring dehydrogenation of precorrin-2 to yield sirohydrochlorin. Finally, it catalyzes the ferrochelation of sirohydrochlorin to yield siroheme. The protein is Siroheme synthase 1 of Aeromonas hydrophila subsp. hydrophila (strain ATCC 7966 / DSM 30187 / BCRC 13018 / CCUG 14551 / JCM 1027 / KCTC 2358 / NCIMB 9240 / NCTC 8049).